We begin with the raw amino-acid sequence, 158 residues long: Scytalone dehydratase-like protein CPUR_05428 (158 aa).

Substrate-binding residues include Y24 and Y44. Residues H79 and H104 contribute to the active site.

The protein belongs to the scytalone dehydratase family.

It functions in the pathway pigment biosynthesis. Functionally, scytalone dehydratase-like protein; part of the ergochrome gene cluster responsible for the typical purple-black color of the ergot sclerotia. The ergochrome gene cluster produces several ergot pigments including the yellow ergochrome secalonic acid and its derivatives, as well as the red anthraquinones endocrocin and clavorubin. The pathway begins with the synthesis of atrochrysone thioester by the polyketide synthase (PKS) CPUR_05437. The atrochrysone carboxyl ACP thioesterase CPUR_05436 then breaks the thioester bond and releases the atrochrysone carboxylic acid from CPUR_05437. The atrochrysone carboxylic acid is then converted to atrochrysone which is further transformed into emodin anthrone. The next step is performed by the anthrone oxygenase CPUR_05434 that catalyzes the oxidation of emodinanthrone to emodin. Emodin is further modified to yield monodictyphenone via several steps involving CPUR_05427, CPUR_05428, CPUR_05429 and CPUR_05430. The short chain dehydrogenase/reductase CPUR_05418 then catalyzes the C-5 ketoreduction to give the xanthone skeleton of the monomeric units. Ergochromes formation requires further dimerization steps of different xanthone units, probably catalyzed by the cytochrome P450 monooxygenase CPUR_05419. CPUR_05425, CPUR_05426 and CPUR_05431 are unique to Claviceps, thus it is likely that they are involved in further modification of xanthone units or in their dimerization. The yellow ergochromes and the red anthraquinone pigments endocrocin and clavorubin are products from the same PKS derived precursors and the latter are likely shunt products in the pathway of xanthone biosynthesis. It is proposed that atrochrysone carboxylic acid released from the PKS CPUR_05437 can also be converted to endocrocin anthrone which is further oxidized into endocrocin by CPUR_05435. Endocrocin could be then modified to clavorubin, possibly by CPUR_05423 and CPUR_05431. Clavorubin is the principal anthraquinone metabolite produced by the cluster with a much higher yield compared to endocrocin. The polypeptide is Scytalone dehydratase-like protein CPUR_05428 (Claviceps purpurea (strain 20.1) (Ergot fungus)).